The chain runs to 321 residues: Protein-L-isoaspartate O-methyltransferase (321 aa).

The span at 21 to 31 shows a compositional bias: basic and acidic residues; sequence KPAERQREKRI. The tract at residues 21-65 is disordered; that stretch reads KPAERQREKRISSGVNAVSLPTPARTASAERASSTPAPGPGPQRV. A compositionally biased stretch (low complexity) spans 41–56; the sequence is PTPARTASAERASSTP. S153 is a catalytic residue.

This sequence belongs to the methyltransferase superfamily. L-isoaspartyl/D-aspartyl protein methyltransferase family.

Its subcellular location is the cytoplasm. The catalysed reaction is [protein]-L-isoaspartate + S-adenosyl-L-methionine = [protein]-L-isoaspartate alpha-methyl ester + S-adenosyl-L-homocysteine. Functionally, catalyzes the methyl esterification of L-isoaspartyl residues in peptides and proteins that result from spontaneous decomposition of normal L-aspartyl and L-asparaginyl residues. It plays a role in the repair and/or degradation of damaged proteins. In Ralstonia nicotianae (strain ATCC BAA-1114 / GMI1000) (Ralstonia solanacearum), this protein is Protein-L-isoaspartate O-methyltransferase.